Reading from the N-terminus, the 397-residue chain is MIRYFTAGESHGPALSAIIEGMPAGVAVSREEIDLQLRRRQQGYGRGGRMKIEQDSAEVLSGIRFGKTIGSPIALVIRNRDWENWTDKMAQFESHEATTEKITIPRPGHADLAGRIKYGFNDIRPVIDRSSARETAARVAAGSLARTFLCQLGIEIGSRISSIGPVTDTGSDKTISALLEKGAECLAGAADRSEVRMLGKKAEEDAIAAIDLAKERGDTLGGIIEIYITGVPVGLGSYVQHDRRLDSQLAAAVMAIQAIKGVEIGPAFENARKPGSEVHDALHLVKGEGVERPTNRSGGIEGSMSSGETIHIRAAMKPISSMQSPLQSFDLATLQPVLSRFERSDTCAVPAAGVVAEAVVAPVIANALFEKFGGDHLEEIRNRLNHYREAVRSAFSG.

Arg-40 and Arg-46 together coordinate NADP(+). Residues 129–131, 257–258, Gly-302, 317–321, and Arg-343 each bind FMN; these read RSS, QA, and KPISS.

Belongs to the chorismate synthase family. As to quaternary structure, homotetramer. FMNH2 is required as a cofactor.

It catalyses the reaction 5-O-(1-carboxyvinyl)-3-phosphoshikimate = chorismate + phosphate. Its pathway is metabolic intermediate biosynthesis; chorismate biosynthesis; chorismate from D-erythrose 4-phosphate and phosphoenolpyruvate: step 7/7. Catalyzes the anti-1,4-elimination of the C-3 phosphate and the C-6 proR hydrogen from 5-enolpyruvylshikimate-3-phosphate (EPSP) to yield chorismate, which is the branch point compound that serves as the starting substrate for the three terminal pathways of aromatic amino acid biosynthesis. This reaction introduces a second double bond into the aromatic ring system. In Chlorobium phaeovibrioides (strain DSM 265 / 1930) (Prosthecochloris vibrioformis (strain DSM 265)), this protein is Chorismate synthase.